Reading from the N-terminus, the 80-residue chain is UPF0270 protein ASA_3305 (80 aa).

It belongs to the UPF0270 family.

This Aeromonas salmonicida (strain A449) protein is UPF0270 protein ASA_3305.